Here is a 336-residue protein sequence, read N- to C-terminus: Holliday junction branch migration complex subunit RuvB (336 aa).

The segment at 4-184 is large ATPase domain (RuvB-L); the sequence is ADRLISAGTT…FGIVQRLEFY (181 aa). ATP contacts are provided by residues Ile23, Arg24, Gly65, Lys68, Thr69, Thr70, 131 to 133, Arg174, Tyr184, and Arg221; that span reads EDY. Thr69 provides a ligand contact to Mg(2+). The interval 185 to 255 is small ATPAse domain (RuvB-S); sequence QVPDLQYIVS…IAAQALDMLN (71 aa). A head domain (RuvB-H) region spans residues 258–336; the sequence is AEGFDYMDRK…HFGITPPEMP (79 aa). Residues Arg294, Arg313, and Arg318 each contribute to the DNA site.

The protein belongs to the RuvB family. Homohexamer. Forms an RuvA(8)-RuvB(12)-Holliday junction (HJ) complex. HJ DNA is sandwiched between 2 RuvA tetramers; dsDNA enters through RuvA and exits via RuvB. An RuvB hexamer assembles on each DNA strand where it exits the tetramer. Each RuvB hexamer is contacted by two RuvA subunits (via domain III) on 2 adjacent RuvB subunits; this complex drives branch migration. In the full resolvosome a probable DNA-RuvA(4)-RuvB(12)-RuvC(2) complex forms which resolves the HJ.

It is found in the cytoplasm. It catalyses the reaction ATP + H2O = ADP + phosphate + H(+). Functionally, the RuvA-RuvB-RuvC complex processes Holliday junction (HJ) DNA during genetic recombination and DNA repair, while the RuvA-RuvB complex plays an important role in the rescue of blocked DNA replication forks via replication fork reversal (RFR). RuvA specifically binds to HJ cruciform DNA, conferring on it an open structure. The RuvB hexamer acts as an ATP-dependent pump, pulling dsDNA into and through the RuvAB complex. RuvB forms 2 homohexamers on either side of HJ DNA bound by 1 or 2 RuvA tetramers; 4 subunits per hexamer contact DNA at a time. Coordinated motions by a converter formed by DNA-disengaged RuvB subunits stimulates ATP hydrolysis and nucleotide exchange. Immobilization of the converter enables RuvB to convert the ATP-contained energy into a lever motion, pulling 2 nucleotides of DNA out of the RuvA tetramer per ATP hydrolyzed, thus driving DNA branch migration. The RuvB motors rotate together with the DNA substrate, which together with the progressing nucleotide cycle form the mechanistic basis for DNA recombination by continuous HJ branch migration. Branch migration allows RuvC to scan DNA until it finds its consensus sequence, where it cleaves and resolves cruciform DNA. This is Holliday junction branch migration complex subunit RuvB from Shigella sonnei (strain Ss046).